The chain runs to 381 residues: Ecotin-like protein 3 (381 aa).

A disordered region spans residues Glu-232 to Lys-381. A compositionally biased stretch (polar residues) spans Asn-273–Asn-292. Basic and acidic residues predominate over residues Arg-336 to Met-347. Polar residues predominate over residues Ser-363–Gly-372.

The protein belongs to the protease inhibitor I11 (ecotin) family.

The protein is Ecotin-like protein 3 of Leishmania major.